The chain runs to 228 residues: Protein K8.1 (228 aa).

The first 26 residues, 1-26, serve as a signal peptide directing secretion; sequence MSSTQIRTEIPVALLILCLCLVACHA. 4 N-linked (GlcNAc...) asparagine; by host glycosylation sites follow: Asn55, Asn60, Asn70, and Asn85. Residues 77–113 form a disordered region; that stretch reads GSPSSEYPNVSVSVEDTSASGSGEDAIDESGSGEEER. The span at 78 to 97 shows a compositional bias: polar residues; sequence SPSSEYPNVSVSVEDTSASG. A helical membrane pass occupies residues 197 to 217; the sequence is LYILWAVGLLLGLVLILYLCV.

It localises to the host membrane. The polypeptide is Protein K8.1 (K8.1) (Human herpesvirus 8 type P (isolate GK18) (HHV-8)).